A 264-amino-acid polypeptide reads, in one-letter code: Putative hydroxypyruvate isomerase (264 aa).

Active-site proton donor/acceptor residues include Glu145 and Glu243.

Belongs to the hyi family.

The catalysed reaction is 3-hydroxypyruvate = 2-hydroxy-3-oxopropanoate. Functionally, catalyzes the reversible isomerization between hydroxypyruvate and 2-hydroxy-3-oxopropanoate (also termed tartronate semialdehyde). In Drosophila melanogaster (Fruit fly), this protein is Putative hydroxypyruvate isomerase (Gip).